The chain runs to 265 residues: MAQLPPKIPVAAPGHHQHWASAGGAGDAAWADEFAEFAASRRGAHRRSLSDSVAFVEVAPAGCGAGGEFDRLDDDQLMSMFPDEGGSSAPGSDNGGSDSDGGGDKHAAAQSDDGQHAAGEPTQEQAAATSPTELIRDPKRVKRILANRQSAQRSRVRKLQYISELERSVTTLQNEVSVLSPRVAFLDQQRTILTVGNSHLKQRIAALAQDKIFKDAHQEALRKEIERLRQVYQQQNTKLSGGLAADHAHVHGGPPPVRAEKELMS.

2 disordered regions span residues 1 to 24 and 77 to 139; these read MAQL…SAGG and LMSM…RDPK. Positions 85–97 are enriched in low complexity; that stretch reads GGSSAPGSDNGGS. The segment covering 122-132 has biased composition (polar residues); sequence TQEQAAATSPT. The region spanning 137–189 is the bZIP domain; that stretch reads DPKRVKRILANRQSAQRSRVRKLQYISELERSVTTLQNEVSVLSPRVAFLDQQ. Positions 139–158 are basic motif; the sequence is KRVKRILANRQSAQRSRVRK. A leucine-zipper region spans residues 165-186; it reads LERSVTTLQNEVSVLSPRVAFL. The disordered stretch occupies residues 239 to 265; that stretch reads LSGGLAADHAHVHGGPPPVRAEKELMS.

In terms of tissue distribution, expressed in roots, shoots and panicles.

Its subcellular location is the nucleus. Transcription regulator. The sequence is that of Basic leucine zipper 6 (BZIP06) from Oryza sativa subsp. japonica (Rice).